A 92-amino-acid polypeptide reads, in one-letter code: Large ribosomal subunit protein eL31 (92 aa).

The residue at position 2 (Ser-2) is an N-acetylserine.

The protein belongs to the eukaryotic ribosomal protein eL31 family. In terms of assembly, part of the 50S ribosomal subunit.

Functionally, binds to the 23S rRNA. Located at the polypeptide exit tunnel on the outside of the subunit. In Haloarcula marismortui (strain ATCC 43049 / DSM 3752 / JCM 8966 / VKM B-1809) (Halobacterium marismortui), this protein is Large ribosomal subunit protein eL31 (rpl31e).